The chain runs to 368 residues: Histidinol-phosphate aminotransferase (368 aa).

An N6-(pyridoxal phosphate)lysine modification is found at Lys-226.

This sequence belongs to the class-II pyridoxal-phosphate-dependent aminotransferase family. Histidinol-phosphate aminotransferase subfamily. In terms of assembly, homodimer. Pyridoxal 5'-phosphate serves as cofactor.

The enzyme catalyses L-histidinol phosphate + 2-oxoglutarate = 3-(imidazol-4-yl)-2-oxopropyl phosphate + L-glutamate. Its pathway is amino-acid biosynthesis; L-histidine biosynthesis; L-histidine from 5-phospho-alpha-D-ribose 1-diphosphate: step 7/9. This is Histidinol-phosphate aminotransferase from Colwellia psychrerythraea (strain 34H / ATCC BAA-681) (Vibrio psychroerythus).